A 479-amino-acid polypeptide reads, in one-letter code: Calcium uniporter protein, mitochondrial (479 aa).

Residues 1–54 constitute a mitochondrion transit peptide; the sequence is MNHALRRATLGLSPGLRASRLQQSFAKHQIPAVYRCEAASTPLQRAFTTSRCFR. Residues 55–323 are Mitochondrial matrix-facing; sequence QETAAESEKD…DTLAHQGAHR (269 aa). Disordered stretches follow at residues 56 to 125 and 206 to 238; these read ETAA…KGRL and EADQNEQDGRKDDNKKKDNANVASYSGLGHEGP. Residues 59–79 adopt a coiled-coil conformation; the sequence is AESEKDDAARREEQSERARKR. Residues 60 to 75 show a composition bias toward basic and acidic residues; it reads ESEKDDAARREEQSER. Residues 83–93 show a composition bias toward polar residues; that stretch reads NVTSGSSAQTL. Basic and acidic residues-rich tracts occupy residues 94–122 and 206–224; these read ENDRPWHRADSGADPDAPKDVPENKDMKK and EADQNEQDGRKDDNKKKDN. A helical membrane pass occupies residues 324–344; it reads LAQGGFAALAGWWGVVYYVTF. The Mitochondrial intermembrane portion of the chain corresponds to 345–354; sequence HTQAGWDLVE. The Selectivity filter signature appears at 350-358; the sequence is WDLVEPVTY. A Ca(2+)-binding site is contributed by Glu-354. The helical transmembrane segment at 355 to 375 threads the bilayer; that stretch reads PVTYLAGLTTVMGAYLWFLYI. At 376 to 479 the chain is on the mitochondrial matrix side; that stretch reads SRDLSYKAAM…GSSDKIKKKQ (104 aa). Over residues 445-462 the composition is skewed to basic and acidic residues; it reads KVLEEEKQGRDGTKVTEG. Positions 445–479 are disordered; sequence KVLEEEKQGRDGTKVTEGKDEDDGPGSSDKIKKKQ.

Belongs to the MCU (TC 1.A.77) family. Homotetramer, assembles in a dimer or dimers configuration with two interfaces.

It localises to the mitochondrion inner membrane. The enzyme catalyses Ca(2+)(in) = Ca(2+)(out). Its function is as follows. Highly selective calcium channel localized to the inner mitochondrial membrane, which mediates calcium uptake into the mitochondrial matrix. Mitochondrial calcium homeostasis plays key roles in cellular physiology and regulates ATP production, cytoplasmic calcium signals and activation of cell death pathways. Sufficient to operate as a pore-forming channel without the need of calcium-sensor or auxiliary subunit. The sequence is that of Calcium uniporter protein, mitochondrial from Gibberella zeae (strain ATCC MYA-4620 / CBS 123657 / FGSC 9075 / NRRL 31084 / PH-1) (Wheat head blight fungus).